The sequence spans 279 residues: Arabinooligosaccharides transport system permease protein AraQ (279 aa).

6 helical membrane passes run 8–28 (ILSW…VFPL), 79–99 (VWIS…VGYA), 110–130 (FFFL…MLPL), 140–160 (VNTY…VFFF), 184–204 (GIFF…MAIL), and 245–265 (ILLA…IFFQ). An ABC transmembrane type-1 domain is found at 75–264 (FGNSVWISIV…VPIVILFIFF (190 aa)).

It belongs to the binding-protein-dependent transport system permease family. MalFG subfamily. In terms of assembly, the complex is composed of two ATP-binding proteins (MsmX), two transmembrane proteins (AraP and AraQ) and a solute-binding protein (AraN).

The protein localises to the cell membrane. In terms of biological role, part of the ABC transporter complex AraNPQ involved in the uptake of arabinooligosaccharides. Responsible for the translocation of the substrate across the membrane. This Halalkalibacterium halodurans (strain ATCC BAA-125 / DSM 18197 / FERM 7344 / JCM 9153 / C-125) (Bacillus halodurans) protein is Arabinooligosaccharides transport system permease protein AraQ (araQ).